Here is a 485-residue protein sequence, read N- to C-terminus: MFAHTALRQRCAKWLFATGLFLLLGACVEKPSTLERVKEDGVLRVITRNSPATYFQDRNGETGFEYELVQHFAEDLGVKLQIETADNLDELYDALGKPSGPVLAAAGLVSSERRKAQVKYSHPYLEVTPQVIYRNGRPRPTNAKGLVGKKIMVLKGSSHADLLAELKKQNPGLEYEESDAVEVVDLLRMVDEGQIDLTLVDSNELAMNQVYFPNVRVAFDVGDTRDQRWAVAAGEDNSLLNEINEFLDKAQKNGTLQRLKDRYYGHVDVLGYVGAYTFAQHLQQRLPKYEKHFKSYAKVEQVDWRLLAAIGYQESMWQPEVTSKTGVRGLMMLTQRTAQAMGVSNRLDPKQSIQGGAKYFMKIKEELDDSIQEPDRTWFALAAYNVGTGHLEDARTLAKREKLNPNKWLDVKKMLPRLSQKQWYRQTKYGYARGGEPVHFVANIRRYYDILTWVTQPQLEGQVAEGNLHVPGVNKDKPADQSPPM.

The N-terminal stretch at 1 to 29 (MFAHTALRQRCAKWLFATGLFLLLGACVE) is a signal peptide. The non-LT domain stretch occupies residues 30-267 (KPSTLERVKE…RLKDRYYGHV (238 aa)). Residues 268–485 (DVLGYVGAYT…DKPADQSPPM (218 aa)) are LT domain. E314 is a catalytic residue. Residues 465 to 485 (EGNLHVPGVNKDKPADQSPPM) are disordered.

It in the N-terminal section; belongs to the bacterial solute-binding protein 3 family. The protein in the C-terminal section; belongs to the transglycosylase Slt family.

It is found in the cell outer membrane. It catalyses the reaction Exolytic cleavage of the (1-&gt;4)-beta-glycosidic linkage between N-acetylmuramic acid (MurNAc) and N-acetylglucosamine (GlcNAc) residues in peptidoglycan, from either the reducing or the non-reducing ends of the peptidoglycan chains, with concomitant formation of a 1,6-anhydrobond in the MurNAc residue.. Functionally, murein-degrading enzyme that degrades murein glycan strands and insoluble, high-molecular weight murein sacculi, with the concomitant formation of a 1,6-anhydromuramoyl product. Lytic transglycosylases (LTs) play an integral role in the metabolism of the peptidoglycan (PG) sacculus. Their lytic action creates space within the PG sacculus to allow for its expansion as well as for the insertion of various structures such as secretion systems and flagella. This is Membrane-bound lytic murein transglycosylase F from Pseudomonas putida (strain GB-1).